The sequence spans 219 residues: Interleukin-12 subunit alpha (219 aa).

A signal peptide spans 1-22; sequence MCPARSLLLVATLVLLDYLSLA. N-linked (GlcNAc...) asparagine glycosylation is found at Asn24, Asn93, and Asn107. 3 cysteine pairs are disulfide-bonded: Cys37–Cys110, Cys64–Cys196, and Cys85–Cys123.

It belongs to the IL-6 superfamily. In terms of assembly, heterodimer with IL12B; disulfide-linked. This heterodimer is known as interleukin IL-12. Heterodimer with EBI3/IL27B; not disulfide-linked. This heterodimer is known as interleukin IL-35. Interacts with NBR1; this interaction promotes IL-12 secretion.

The protein resides in the secreted. Functionally, heterodimerizes with IL12B to form the IL-12 cytokine or with EBI3/IL27B to form the IL-35 cytokine. IL-12 is primarily produced by professional antigen-presenting cells (APCs) such as B-cells and dendritic cells (DCs) as well as macrophages and granulocytes and regulates T-cell and natural killer-cell responses, induces the production of interferon-gamma (IFN-gamma), favors the differentiation of T-helper 1 (Th1) cells and is an important link between innate resistance and adaptive immunity. Mechanistically, exerts its biological effects through a receptor composed of IL12R1 and IL12R2 subunits. Binding to the receptor results in the rapid tyrosine phosphorylation of a number of cellular substrates including the JAK family kinases TYK2 and JAK2. In turn, recruited STAT4 gets phosphorylated and translocates to the nucleus where it regulates cytokine/growth factor responsive genes. As part of IL-35, plays essential roles in maintaining the immune homeostasis of the liver microenvironment and also functions as an immune-suppressive cytokine. Mediates biological events through unconventional receptors composed of IL12RB2 and gp130/IL6ST heterodimers or homodimers. Signaling requires the transcription factors STAT1 and STAT4, which form a unique heterodimer that binds to distinct DNA sites. This Cercocebus atys (Sooty mangabey) protein is Interleukin-12 subunit alpha (IL12A).